The following is a 211-amino-acid chain: Riboflavin kinase (211 aa).

An H-T-H motif-like region spans residues 1-81 (MKCIDRRLIG…DLLRYFNILS (81 aa)). A riboflavin kinase region spans residues 82-211 (IRLSGRVVSG…DRVEIEIYLE (130 aa)). A CDP-binding site is contributed by 91–96 (GLGEGA). 2 residues coordinate Mg(2+): T120 and N122. T177 and E185 together coordinate FMN. A CDP-binding site is contributed by 190-193 (FKLR).

This sequence belongs to the archaeal riboflavin kinase family. Mg(2+) is required as a cofactor.

It catalyses the reaction riboflavin + CTP = CDP + FMN + H(+). It functions in the pathway cofactor biosynthesis; FMN biosynthesis; FMN from riboflavin (CTP route): step 1/1. Functionally, catalyzes the CTP-dependent phosphorylation of riboflavin (vitamin B2) to form flavin mononucleotide (FMN). This is Riboflavin kinase (ribK) from Pyrobaculum islandicum (strain DSM 4184 / JCM 9189 / GEO3).